Consider the following 263-residue polypeptide: MGSEISKKDITRLGFRSSLLQASFNYERMQAGGFTWAMLPILKKIYKDDKPGLSAAMKDNLEFINTHPNLVGFLMGLLISMEEKGENRDTIKGLKVALFGPIAGIGDAIFWFTLLPIMAGICSSFASQGNLLGPILFFAVYLLIFFLRVGWTHVGYSVGVKAIDKVRENSQMIARSATILGITVIGGLIASYVHINVVTSFAIDNTHSVALQQDFFDKVFPNILPMAYTLLMYYFLRVKKAHPVLLIGVTFVLSIVCSAFGIL.

The 261-residue stretch at 3–263 (SEISKKDITR…SIVCSAFGIL (261 aa)) folds into the PTS EIID domain. 6 consecutive transmembrane segments (helical) span residues 61–81 (LEFI…LISM), 98–118 (LFGP…LPIM), 131–151 (LLGP…RVGW), 178–198 (TILG…INVV), 215–235 (FFDK…MYYF), and 243–263 (PVLL…FGIL).

Its subcellular location is the cell inner membrane. In terms of biological role, the phosphoenolpyruvate-dependent sugar phosphotransferase system (PTS), a major carbohydrate active -transport system, catalyzes the phosphorylation of incoming sugar substrates concomitant with their translocation across the cell membrane. This system is involved in N-acetylgalactosamine transport. The polypeptide is N-acetylgalactosamine permease IID component (agaD) (Escherichia coli (strain K12)).